A 761-amino-acid polypeptide reads, in one-letter code: MLASSKRMNSSSRSQILLRWKSDKAQSGPYNVEKEILTSRFLRDTETCRQNFRNFPYPDLAGPRKALSQLRELCLKWLRPEIHSKEQILELLVLEQFLTILPGEVRTWVKSQYPESSEEAVTLVEDLTQILEEEAPQNSTLSQDTPEEDPRGKHAFQTGWLNDLVTKESMTFKDVAVDITQEDWELMRPVQKELYKTVTLQNYWNMVSLGLTVYRPTVIPILEEPWMVIKEILEGPSPEWETKAQACTPVEDMSKLTKEETHTIKLEDSYDYDDRLERRGKGGFWKIHTDERGFSLKSVLSQEYDPTEECLSKYDIYRNNFEKHSNLIVQFDTQLDNKTSVYNEGRATFNHVSYGIVHRKILPGEKPYKCNVCGKKFRKYPSLLKHQSTHAKEKSYECEECGKEFRHISSLIAHQRMHTGEKPYECHQCGKAFSQRAHLTIHQRIHTGEKPYKCDDCGKDFSQRAHLTIHQRTHTGEKPYKCLECGKTFSHSSSLINHQRVHTGEKPYICNECGKTFSQSTHLLQHQKIHTGKKPYKCNECWKVFSQSTYLIRHQRIHSGEKCYKCNECGKAFAHSSTLIQHQTTHTGEKSYICNICGKAFSQSANLTQHHRTHTGEKPYKCSVCGKAFSQSVHLTQHQRIHNGEKPFKCNICGKAYRQGANLTQHQRIHTGEKPYKCNECGKAFIYSSSLNQHQRTHTGERPYKCNECDKDFSQRTCLIQHQRIHTGEKPYACRICGKTFTQSTNLIQHQRVHTGAKHRN.

The 83-residue stretch at 49 to 131 (RQNFRNFPYP…TLVEDLTQIL (83 aa)) folds into the SCAN box domain. Positions 134–154 (EAPQNSTLSQDTPEEDPRGKH) are disordered. Residues 170 to 238 (MTFKDVAVDI…IKEILEGPSP (69 aa)) form the KRAB domain. C2H2-type zinc fingers lie at residues 368–390 (YKCNVCGKKFRKYPSLLKHQSTH), 396–418 (YECEECGKEFRHISSLIAHQRMH), 424–446 (YECHQCGKAFSQRAHLTIHQRIH), 452–474 (YKCDDCGKDFSQRAHLTIHQRTH), 480–502 (YKCLECGKTFSHSSSLINHQRVH), 508–530 (YICNECGKTFSQSTHLLQHQKIH), 536–558 (YKCNECWKVFSQSTYLIRHQRIH), 564–586 (YKCNECGKAFAHSSTLIQHQTTH), 592–614 (YICNICGKAFSQSANLTQHHRTH), 620–642 (YKCSVCGKAFSQSVHLTQHQRIH), 648–670 (FKCNICGKAYRQGANLTQHQRIH), 676–698 (YKCNECGKAFIYSSSLNQHQRTH), 704–726 (YKCNECDKDFSQRTCLIQHQRIH), and 732–754 (YACRICGKTFTQSTNLIQHQRVH).

The protein belongs to the krueppel C2H2-type zinc-finger protein family.

Its subcellular location is the nucleus. In terms of biological role, may be involved in transcriptional regulation. In Homo sapiens (Human), this protein is Zinc finger protein 287.